Consider the following 305-residue polypeptide: Tyrosine recombinase XerC (305 aa).

In terms of domain architecture, Core-binding (CB) spans Thr-4–Glu-95. Residues Leu-116 to Thr-298 enclose the Tyr recombinase domain. Active-site residues include Arg-159, Lys-182, His-250, Arg-253, and His-276. The O-(3'-phospho-DNA)-tyrosine intermediate role is filled by Tyr-285.

The protein belongs to the 'phage' integrase family. XerC subfamily. As to quaternary structure, forms a cyclic heterotetrameric complex composed of two molecules of XerC and two molecules of XerD.

The protein localises to the cytoplasm. Site-specific tyrosine recombinase, which acts by catalyzing the cutting and rejoining of the recombining DNA molecules. The XerC-XerD complex is essential to convert dimers of the bacterial chromosome into monomers to permit their segregation at cell division. It also contributes to the segregational stability of plasmids. In Rickettsia massiliae (strain Mtu5), this protein is Tyrosine recombinase XerC.